Here is a 134-residue protein sequence, read N- to C-terminus: D-ribose pyranase (134 aa).

Catalysis depends on His20, which acts as the Proton donor. Substrate-binding positions include Asp28, His99, and 123-125 (YSN).

It belongs to the RbsD / FucU family. RbsD subfamily. Homodecamer.

It localises to the cytoplasm. It catalyses the reaction beta-D-ribopyranose = beta-D-ribofuranose. It participates in carbohydrate metabolism; D-ribose degradation; D-ribose 5-phosphate from beta-D-ribopyranose: step 1/2. Its function is as follows. Catalyzes the interconversion of beta-pyran and beta-furan forms of D-ribose. The polypeptide is D-ribose pyranase (Staphylococcus aureus (strain USA300)).